A 453-amino-acid polypeptide reads, in one-letter code: Vitamin D3 receptor A (453 aa).

A DNA-binding region (nuclear receptor) is located at residues 53-128 (PRICGVCGDK…IGMMKEFILT (76 aa)). Zn(2+) is bound by residues Cys56, Cys59, Cys73, Cys76, Cys92, Cys98, Cys108, and Cys111. NR C4-type zinc fingers lie at residues 56–76 (CGVCGDKATGFHFNAMTCEGC) and 92–111 (CPFNGNCTITKDNRRHCQAC). Positions 129–158 (DEEVQRKKDLIMKRKEEEAAREARKPRLSD) are hinge. One can recognise an NR LBD domain in the interval 159–449 (EQMQIINSLV…LTPLVLEVFG (291 aa)). Calcitriol-binding residues include Tyr175 and Ser265. Residues 274–292 (KMIPGFRDLTAEDQIALLK) form an interaction with coactivator LXXLL motif region. Residues Arg302, Ser306, His333, and His423 each contribute to the calcitriol site. A 9aaTAD motif is present at residues 442-450 (PLVLEVFGS).

The protein belongs to the nuclear hormone receptor family. NR1 subfamily. Homodimer in the absence of bound vitamin D3. Heterodimer with RXRA after vitamin D3 binding. Interacts with ncoa1 and possibly other coactivators, leading to a strong increase of transcription of target genes. In terms of tissue distribution, detected in embryo 24 to 48 hours after fertilization and in gastrula.

Its subcellular location is the nucleus. It is found in the cytoplasm. Nuclear receptor for calcitriol, the active form of vitamin D3 which mediates the action of this vitamin on cells. Enters the nucleus upon vitamin D3 binding where it forms heterodimers with the retinoid X receptor/RXR. The VDR-RXR heterodimers bind to specific response elements on DNA and activate the transcription of vitamin D3-responsive target genes. Recruited to promoters via its interaction with BAZ1B/WSTF which mediates the interaction with acetylated histones, an essential step for VDR-promoter association. Plays a central role in calcium homeostasis. In Danio rerio (Zebrafish), this protein is Vitamin D3 receptor A (vdra).